We begin with the raw amino-acid sequence, 1010 residues long: Retinoblastoma-related protein 1 (1010 aa).

A disordered region spans residues 1 to 23 (MEGAAPPASSGSEVTGAGSGKVD). Residues 419–619 (TPVSTAMTTA…EKGSSMYNSL (201 aa)) are domain A. The pocket stretch occupies residues 419–861 (TPVSTAMTTA…NEVFIPTVKP (443 aa)). The tract at residues 620–730 (IVARPTLSAE…PAAGGELCAE (111 aa)) is spacer. Residues 657–679 (LPPLPFQKQEHSPDKDEVRSPKR) are disordered. Residues 664–679 (KQEHSPDKDEVRSPKR) are compositionally biased toward basic and acidic residues. The tract at residues 731–861 (TGIGVFLSKI…NEVFIPTVKP (131 aa)) is domain B. Residues 868 to 898 (SGTSPNKKNEEKCAADGPYPESPRLSRFPNL) form a disordered region.

Belongs to the retinoblastoma protein (RB) family.

The protein localises to the nucleus. Functionally, regulator of biological processes that recruits a histone deacetylase to control gene transcription. May play a role in the entry into mitosis, negatively regulating the cell proliferation. Formation of stable complexes with geminiviridae replication-associated proteins may create a cellular environment which favors viral DNA replication. The protein is Retinoblastoma-related protein 1 (RBR1) of Oryza sativa subsp. japonica (Rice).